The sequence spans 338 residues: tRNA N6-adenosine threonylcarbamoyltransferase (338 aa).

Fe cation-binding residues include H111 and H115. Substrate-binding positions include 134 to 138 (LVSGG), D167, G180, and N272. A Fe cation-binding site is contributed by D300.

This sequence belongs to the KAE1 / TsaD family. Fe(2+) serves as cofactor.

It localises to the cytoplasm. The catalysed reaction is L-threonylcarbamoyladenylate + adenosine(37) in tRNA = N(6)-L-threonylcarbamoyladenosine(37) in tRNA + AMP + H(+). Its function is as follows. Required for the formation of a threonylcarbamoyl group on adenosine at position 37 (t(6)A37) in tRNAs that read codons beginning with adenine. Is involved in the transfer of the threonylcarbamoyl moiety of threonylcarbamoyl-AMP (TC-AMP) to the N6 group of A37, together with TsaE and TsaB. TsaD likely plays a direct catalytic role in this reaction. The chain is tRNA N6-adenosine threonylcarbamoyltransferase from Shewanella oneidensis (strain ATCC 700550 / JCM 31522 / CIP 106686 / LMG 19005 / NCIMB 14063 / MR-1).